We begin with the raw amino-acid sequence, 251 residues long: Anamorsin homolog (251 aa).

The segment at 1 to 154 is N-terminal SAM-like domain; that stretch reads MINFSNTLVI…AENPDFNKSD (154 aa). The interval 155–167 is linker; it reads DDNNLVSSDEEIY. [2Fe-2S] cluster-binding residues include C170, C181, C184, and C186. The interval 170–186 is fe-S binding site A; that stretch reads CEDKKKVVNRVCDNCTC. Residues C216, C219, C227, and C230 each contribute to the [4Fe-4S] cluster site. 2 consecutive short sequence motifs (cx2C motif) follow at residues 216–219 and 227–230; these read CGNC and CGSC. Residues 216–230 are fe-S binding site B; it reads CGNCYLGDAFRCGSC.

This sequence belongs to the anamorsin family. In terms of assembly, monomer. [2Fe-2S] cluster is required as a cofactor. It depends on [4Fe-4S] cluster as a cofactor.

Its subcellular location is the cytoplasm. The protein resides in the mitochondrion intermembrane space. Functionally, component of the cytosolic iron-sulfur (Fe-S) protein assembly (CIA) machinery. Required for the maturation of extramitochondrial Fe-S proteins. Part of an electron transfer chain functioning in an early step of cytosolic Fe-S biogenesis, facilitating the de novo assembly of a [4Fe-4S] cluster on the cytosolic Fe-S scaffold complex. Electrons are transferred from NADPH via a FAD- and FMN-containing diflavin oxidoreductase. Together with the diflavin oxidoreductase, also required for the assembly of the diferric tyrosyl radical cofactor of ribonucleotide reductase (RNR), probably by providing electrons for reduction during radical cofactor maturation in the catalytic small subunit. The chain is Anamorsin homolog from Plasmodium yoelii yoelii.